A 564-amino-acid polypeptide reads, in one-letter code: Mitochondrial distribution and morphology protein 34 (564 aa).

One can recognise an SMP-LTD domain in the interval 1–208; that stretch reads MAFNFNWSPL…VPEYRDRESE (208 aa). 5 disordered regions span residues 208–240, 336–397, 404–423, 434–517, and 532–564; these read ESVN…NALN, SGGS…SAPT, QFSE…PQND, RISQ…DPRQ, and IQEE…AYGH. Positions 209–219 are enriched in polar residues; it reads SVNTLDQSSGP. Basic residues predominate over residues 351–365; sequence SGRHPRPHGKKRKKR. Over residues 366 to 376 the composition is skewed to basic and acidic residues; sequence VVDLRRPKTTD. Over residues 380–390 the composition is skewed to low complexity; it reads SVSGESVFSSE. Polar residues-rich tracts occupy residues 438 to 462 and 477 to 503; these read GEHT…SRNS and PRNS…SSAI.

This sequence belongs to the MDM34 family. In terms of assembly, component of the ER-mitochondria encounter structure (ERMES) or MDM complex, composed of mmm1, mdm10, mdm12 and mdm34.

It is found in the mitochondrion outer membrane. Its function is as follows. Component of the ERMES/MDM complex, which serves as a molecular tether to connect the endoplasmic reticulum (ER) and mitochondria. Components of this complex are involved in the control of mitochondrial shape and protein biogenesis, and function in nonvesicular lipid trafficking between the ER and mitochondria. Mdm34 is required for the interaction of the ER-resident membrane protein mmm1 and the outer mitochondrial membrane-resident beta-barrel protein mdm10. The protein is Mitochondrial distribution and morphology protein 34 of Talaromyces stipitatus (strain ATCC 10500 / CBS 375.48 / QM 6759 / NRRL 1006) (Penicillium stipitatum).